The sequence spans 66 residues: Large ribosomal subunit protein bL35 (66 aa).

Residues 1–26 are compositionally biased toward basic residues; it reads MPKMKTHRGAAKRVKRTASGKLKRSR. The tract at residues 1–49 is disordered; it reads MPKMKTHRGAAKRVKRTASGKLKRSRAFTSHLFANKSTKQKRKLRKASL.

This sequence belongs to the bacterial ribosomal protein bL35 family.

The protein is Large ribosomal subunit protein bL35 of Staphylococcus carnosus (strain TM300).